Reading from the N-terminus, the 155-residue chain is Putative pre-16S rRNA nuclease (155 aa).

It belongs to the YqgF nuclease family.

Its subcellular location is the cytoplasm. In terms of biological role, could be a nuclease involved in processing of the 5'-end of pre-16S rRNA. This Wolbachia pipientis wMel protein is Putative pre-16S rRNA nuclease.